We begin with the raw amino-acid sequence, 181 residues long: Thioredoxin-like protein CITRX2, chloroplastic (181 aa).

A chloroplast-targeting transit peptide spans 1-70; the sequence is MQAATLSFQP…PDVATGKYVR (70 aa). One can recognise a Thioredoxin domain in the interval 72–181; that stretch reads DYLVKKVSAK…MMRDIINNDL (110 aa). Residues C104 and C107 each act as nucleophile in the active site. A disulfide bridge connects residues C104 and C107.

Belongs to the thioredoxin family. Plant CITRX-type subfamily.

It localises to the plastid. The protein localises to the chloroplast. Probable thiol-disulfide oxidoreductase that may play a role in proper chloroplast development. This chain is Thioredoxin-like protein CITRX2, chloroplastic, found in Nicotiana benthamiana.